We begin with the raw amino-acid sequence, 3996 residues long: Probable E3 ubiquitin-protein ligase HECTD4 (3996 aa).

Residues 282-302 (TCIIRCILVVFQVVFKFFFSP) traverse the membrane as a helical segment. The span at 1494–1510 (PTASEPDTTLTKTSPKN) shows a compositional bias: polar residues. Disordered regions lie at residues 1494 to 1524 (PTAS…ESEA) and 1616 to 1637 (PETV…SICR). Thr-2080 bears the Phosphothreonine mark. Disordered regions lie at residues 2219 to 2245 (FITS…DDIP), 2859 to 2919 (TSAT…PTVL), 3017 to 3053 (EDTK…STSS), and 3327 to 3403 (FDKS…QEVP). Acidic residues predominate over residues 2232 to 2245 (ADDESDDDDDDDIP). The segment covering 2866 to 2887 (LSDSSSSSSSSPGQTPQSPSLL) has biased composition (low complexity). Positions 2888–2897 (SKRKKVKMKR) are enriched in basic residues. 3 stretches are compositionally biased toward basic and acidic residues: residues 3017 to 3037 (EDTK…EPEK), 3327 to 3341 (FDKS…EQHP), and 3370 to 3403 (LSEK…QEVP). One can recognise an HECT domain in the interval 3627 to 3996 (SGGDPTYAFN…IHYREDPLSG (370 aa)). The active-site Glycyl thioester intermediate is Cys-3964.

Its subcellular location is the membrane. The catalysed reaction is S-ubiquitinyl-[E2 ubiquitin-conjugating enzyme]-L-cysteine + [acceptor protein]-L-lysine = [E2 ubiquitin-conjugating enzyme]-L-cysteine + N(6)-ubiquitinyl-[acceptor protein]-L-lysine.. The protein operates within protein modification; protein ubiquitination. E3 ubiquitin-protein ligase which accepts ubiquitin from an E2 ubiquitin-conjugating enzyme in the form of a thioester and then directly transfers the ubiquitin to targeted substrates. The chain is Probable E3 ubiquitin-protein ligase HECTD4 (HECTD4) from Homo sapiens (Human).